A 105-amino-acid polypeptide reads, in one-letter code: Probable tetrachloroethene reductive dehalogenase membrane anchor protein (105 aa).

The next 3 membrane-spanning stretches (helical) occupy residues 3–23, 35–55, and 66–86; these read IYDV…QYGI, IPLQ…LAWG, and AIGM…IITY.

The protein belongs to the PceB family.

Its subcellular location is the cell membrane. Functionally, may act as a membrane anchor for the tetrachloroethene reductive dehalogenase PceA. In Dehalobacter restrictus (strain DSM 9455 / PER-K23), this protein is Probable tetrachloroethene reductive dehalogenase membrane anchor protein.